Consider the following 356-residue polypeptide: INO80 complex subunit B (356 aa).

The disordered stretch occupies residues 1–71; it reads MSKLWRRGST…PSPAKPQLKL (71 aa). Residues 33–51 show a composition bias toward basic residues; it reads HGVHKKKHKKHKKKHKKKH. A phosphoserine mark is found at serine 97, serine 99, serine 127, serine 130, and serine 132. The disordered stretch occupies residues 124-150; the sequence is DEDSNLSPSPLRDLSGGLGGQEEEEEQ. The stretch at 213-245 forms a coiled coil; it reads LLKREERARKRRLQAARRAEEHKNQTIERLTKT. Disordered stretches follow at residues 246–269 and 286–310; these read AATS…AAAP and FPPG…PRCS. The segment at 305–336 adopts an HIT-type zinc-finger fold; that stretch reads PPPRCSVPGCPHPRRYACSRTGQALCSLQCYR.

In terms of assembly, component of the chromatin remodeling INO80 complex; specifically part of a complex module associated with the helicase ATP-binding and the helicase C-terminal domain of INO80. Interacts with RP9.

The protein resides in the nucleus. It is found in the nucleolus. In terms of biological role, induces growth and cell cycle arrests at the G1 phase of the cell cycle. Functionally, proposed core component of the chromatin remodeling INO80 complex which is involved in transcriptional regulation, DNA replication and probably DNA repair. This Homo sapiens (Human) protein is INO80 complex subunit B (INO80B).